A 1217-amino-acid chain; its full sequence is ATP-dependent helicase/nuclease subunit A (1217 aa).

Residues 10–475 (VIWTDAQWQS…MDLSQNFRSR (466 aa)) enclose the UvrD-like helicase ATP-binding domain. Residue 31–38 (AAAGSGKT) participates in ATP binding. Residues 491-786 (DEQVGEVNYD…RMMTIHSSKG (296 aa)) form the UvrD-like helicase C-terminal domain.

This sequence belongs to the helicase family. AddA subfamily. Heterodimer of AddA and AddB/RexB. Mg(2+) serves as cofactor.

The enzyme catalyses Couples ATP hydrolysis with the unwinding of duplex DNA by translocating in the 3'-5' direction.. It catalyses the reaction ATP + H2O = ADP + phosphate + H(+). Its function is as follows. The heterodimer acts as both an ATP-dependent DNA helicase and an ATP-dependent, dual-direction single-stranded exonuclease. Recognizes the chi site generating a DNA molecule suitable for the initiation of homologous recombination. The AddA nuclease domain is required for chi fragment generation; this subunit has the helicase and 3' -&gt; 5' nuclease activities. In Staphylococcus aureus (strain bovine RF122 / ET3-1), this protein is ATP-dependent helicase/nuclease subunit A.